The sequence spans 322 residues: Acetyl-coenzyme A carboxylase carboxyl transferase subunit alpha (322 aa).

The CoA carboxyltransferase C-terminal domain maps to Pro40–Glu297.

This sequence belongs to the AccA family. Acetyl-CoA carboxylase is a heterohexamer composed of biotin carboxyl carrier protein (AccB), biotin carboxylase (AccC) and two subunits each of ACCase subunit alpha (AccA) and ACCase subunit beta (AccD).

It is found in the cytoplasm. It catalyses the reaction N(6)-carboxybiotinyl-L-lysyl-[protein] + acetyl-CoA = N(6)-biotinyl-L-lysyl-[protein] + malonyl-CoA. It functions in the pathway lipid metabolism; malonyl-CoA biosynthesis; malonyl-CoA from acetyl-CoA: step 1/1. Component of the acetyl coenzyme A carboxylase (ACC) complex. First, biotin carboxylase catalyzes the carboxylation of biotin on its carrier protein (BCCP) and then the CO(2) group is transferred by the carboxyltransferase to acetyl-CoA to form malonyl-CoA. The polypeptide is Acetyl-coenzyme A carboxylase carboxyl transferase subunit alpha (Gemmatimonas aurantiaca (strain DSM 14586 / JCM 11422 / NBRC 100505 / T-27)).